A 439-amino-acid chain; its full sequence is Omega-aminotransferase (439 aa).

A pyridoxal 5'-phosphate-binding site is contributed by 112-113 (GS). Lys281 carries the post-translational modification N6-(pyridoxal phosphate)lysine. Thr318 is a pyridoxal 5'-phosphate binding site.

It belongs to the class-III pyridoxal-phosphate-dependent aminotransferase family. Homotetramer. The cofactor is pyridoxal 5'-phosphate.

The enzyme catalyses 3-oxopropanoate + L-alanine = beta-alanine + pyruvate. It catalyses the reaction 3-aminobutanoate + pyruvate = acetoacetate + L-alanine. It carries out the reaction benzylamine + pyruvate = benzaldehyde + L-alanine. The catalysed reaction is (S)-1-phenylethylamine + pyruvate = acetophenone + L-alanine. The enzyme catalyses 2-phenylethylamine + pyruvate = 2-phenylacetaldehyde + L-alanine. It catalyses the reaction 1-phenylpropylamine + pyruvate = 1-phenylpropan-1-one + L-alanine. It carries out the reaction 3-phenylpropylamine + pyruvate = 3-phenylpropanal + L-alanine. Aminotransferase that can use beta-amino acids, aliphatic amines, or aromatic amines as amino donors, and pyruvate as amino acceptor. Shows high activity for short-chain beta-amino acids, with the highest activity for 3-aminobutanoate and beta-alanine in vitro. Displays higher activity toward aromatic amines than aliphatic amines. May be involved in beta-alanine biosynthesis and/or degradation. This Caulobacter vibrioides (strain ATCC 19089 / CIP 103742 / CB 15) (Caulobacter crescentus) protein is Omega-aminotransferase.